A 356-amino-acid polypeptide reads, in one-letter code: Guanine nucleotide-binding protein alpha-15 subunit (356 aa).

Glycine 2 carries the N-myristoyl glycine lipid modification. A lipid anchor (S-palmitoyl cysteine) is attached at cysteine 5. The 324-residue stretch at 33 to 356 (GNQKLLLLGT…GRNLRGTGME (324 aa)) folds into the G-alpha domain. Residues 36-49 (KLLLLGTGECGKST) are G1 motif. Residues 41 to 48 (GTGECGKS), 177 to 183 (LRIRIPT), 202 to 206 (DVGGQ), 271 to 274 (NKRD), and alanine 328 contribute to the GTP site. Mg(2+) contacts are provided by serine 48 and threonine 183. The segment at 175-183 (DMLRIRIPT) is G2 motif. Residues 198-207 (FRIYDVGGQR) are G3 motif. The interval 267 to 274 (ILFLNKRD) is G4 motif. Residues 326–331 (TCATDT) form a G5 motif region.

Belongs to the G-alpha family. As to quaternary structure, g proteins are composed of 3 units; alpha, beta and gamma. The alpha chain contains the guanine nucleotide binding site.

In terms of biological role, guanine nucleotide-binding proteins (G proteins) are involved as modulators or transducers in various transmembrane signaling systems. The protein is Guanine nucleotide-binding protein alpha-15 subunit (gpa-15) of Caenorhabditis elegans.